The following is a 594-amino-acid chain: Proteasome-associated ATPase (594 aa).

The stretch at 20 to 98 (DDLAAQVTYL…KEEIDRLAQP (79 aa)) forms a coiled coil. 282–287 (GCGKTL) contributes to the ATP binding site. Residues 593 to 594 (YL) are docks into pockets in the proteasome alpha-ring.

This sequence belongs to the AAA ATPase family. As to quaternary structure, homohexamer. Assembles into a hexameric ring structure that caps the 20S proteasome core. Strongly interacts with the prokaryotic ubiquitin-like protein Pup through a hydrophobic interface; the interacting region of ARC lies in its N-terminal coiled-coil domain. There is one Pup binding site per ARC hexamer ring. Upon ATP-binding, the C-terminus of ARC interacts with the alpha-rings of the proteasome core, possibly by binding to the intersubunit pockets.

It participates in protein degradation; proteasomal Pup-dependent pathway. Its function is as follows. ATPase which is responsible for recognizing, binding, unfolding and translocation of pupylated proteins into the bacterial 20S proteasome core particle. May be essential for opening the gate of the 20S proteasome via an interaction with its C-terminus, thereby allowing substrate entry and access to the site of proteolysis. Thus, the C-termini of the proteasomal ATPase may function like a 'key in a lock' to induce gate opening and therefore regulate proteolysis. This is Proteasome-associated ATPase from Catenulispora acidiphila (strain DSM 44928 / JCM 14897 / NBRC 102108 / NRRL B-24433 / ID139908).